We begin with the raw amino-acid sequence, 457 residues long: MVKVRFAPSPTGYIHIGNIRSALFNWLYAQAHKGEFILRYDDTDVERSKQEYIDAIAVDLEWLGIQPDAIYYQSKRFNRYDEVAEILKQRGLLYPCYETAEELERRRKIQLSRKLPPIYDRAALKLTAEEKKNCESQGRKPHWRFLLPNFENDPLQTKRTEVCWNDAVKGKQTIDLASLSDPVLIREDETYLYTLPSVVDDVDMAITHIIRGDDHITNTGVQIALFKALDAELPVFGHTNLLATVLGKGFSKRNNDLSIRSLREEGFESIAVQCLAVLIGTSQNVHPYPHQAALLEHFNLQDTSKSVAKFDIADLCTLNSHLVHELNYEDVKTRLKNLSIEGEKAEYFWNAIRSNIDKVNEAVLWWKIIHDEQNFDAVAQEDRAFVQQSLNFLPEGVLKDESWQVWTTALKEKTGRKGKSLFMPLRQALTGMDHGPEMGKLLQLLGREKVIERLSRK.

A 'HIGH' region motif is present at residues 8 to 18 (PSPTGYIHIGN). A 'KMSKS' region motif is present at residues 249–253 (GFSKR). Lysine 252 contributes to the ATP binding site.

This sequence belongs to the class-I aminoacyl-tRNA synthetase family. Glutamate--tRNA ligase type 1 subfamily. In terms of assembly, monomer.

It is found in the cytoplasm. The enzyme catalyses tRNA(Glu) + L-glutamate + ATP = L-glutamyl-tRNA(Glu) + AMP + diphosphate. Its function is as follows. Catalyzes the attachment of glutamate to tRNA(Glu) in a two-step reaction: glutamate is first activated by ATP to form Glu-AMP and then transferred to the acceptor end of tRNA(Glu). This is Glutamate--tRNA ligase 2 from Bartonella tribocorum (strain CIP 105476 / IBS 506).